Here is a 470-residue protein sequence, read N- to C-terminus: Argininosuccinate lyase (470 aa).

The protein belongs to the lyase 1 family. Argininosuccinate lyase subfamily.

Its subcellular location is the cytoplasm. It catalyses the reaction 2-(N(omega)-L-arginino)succinate = fumarate + L-arginine. The protein operates within amino-acid biosynthesis; L-arginine biosynthesis; L-arginine from L-ornithine and carbamoyl phosphate: step 3/3. This Leptospira borgpetersenii serovar Hardjo-bovis (strain L550) protein is Argininosuccinate lyase.